A 233-amino-acid chain; its full sequence is Small ribosomal subunit protein uS3 (233 aa).

Residues 39–107 form the KH type-2 domain; the sequence is VREFLKAKLK…PVHVNIEEVR (69 aa). The disordered stretch occupies residues 209 to 233; sequence PGQVSAEPTQPEKKMRKGGRNAAAN.

Belongs to the universal ribosomal protein uS3 family. In terms of assembly, part of the 30S ribosomal subunit. Forms a tight complex with proteins S10 and S14.

In terms of biological role, binds the lower part of the 30S subunit head. Binds mRNA in the 70S ribosome, positioning it for translation. This Laribacter hongkongensis (strain HLHK9) protein is Small ribosomal subunit protein uS3.